We begin with the raw amino-acid sequence, 500 residues long: Maturase K (500 aa).

The protein belongs to the intron maturase 2 family. MatK subfamily.

It localises to the plastid. The protein resides in the chloroplast. Its function is as follows. Usually encoded in the trnK tRNA gene intron. Probably assists in splicing its own and other chloroplast group II introns. The sequence is that of Maturase K from Fragaria vesca (Woodland strawberry).